The following is a 441-amino-acid chain: Homogentisate 1,2-dioxygenase (441 aa).

Catalysis depends on His-287, which acts as the Proton acceptor. His-330 and Glu-336 together coordinate Fe cation. Positions 345 and 366 each coordinate homogentisate. His-366 provides a ligand contact to Fe cation.

This sequence belongs to the homogentisate dioxygenase family. As to quaternary structure, hexamer; dimer of trimers. The cofactor is Fe cation.

The enzyme catalyses homogentisate + O2 = 4-maleylacetoacetate + H(+). The protein operates within amino-acid degradation; L-phenylalanine degradation; acetoacetate and fumarate from L-phenylalanine: step 4/6. Its function is as follows. Involved in the catabolism of homogentisate (2,5-dihydroxyphenylacetate or 2,5-OH-PhAc), a central intermediate in the degradation of phenylalanine and tyrosine. Catalyzes the oxidative ring cleavage of the aromatic ring of homogentisate to yield maleylacetoacetate. In Xanthomonas oryzae pv. oryzae (strain MAFF 311018), this protein is Homogentisate 1,2-dioxygenase.